A 391-amino-acid chain; its full sequence is Probable sugar efflux transporter (391 aa).

12 helical membrane passes run 16–36, 51–71, 82–102, 103–123, 138–158, 170–190, 210–230, 247–267, 277–297, 300–320, 338–358, and 361–381; these read VFVF…PVAL, VGLM…PLML, LLFL…AWNF, WVLL…WSIT, QALG…LPLG, TFGV…KLLP, PLLV…FTTY, ITTL…FLFG, FIAF…VFKN, WVIF…TIAL, IFSG…SIVI, and LGLE…LFWL.

This sequence belongs to the major facilitator superfamily. SotB (TC 2.A.1.2) family.

The protein resides in the cell inner membrane. Its function is as follows. Involved in the efflux of sugars. The physiological role may be the reduction of the intracellular concentration of toxic sugars or sugar metabolites. The chain is Probable sugar efflux transporter from Helicobacter pylori (strain P12).